A 268-amino-acid chain; its full sequence is MSWDDEEFEVRTSTKDQPMVVSWDDEFNNDDDDALLESWDAEEVPKQKQKPKAAPKAAKKVDKKGETVLLEIDTLDEKTRKELLKKAELNSDLNNAAALFDGLGVAEEHPRARALRQEEELAALSRPAALTKQTPFESHPLFSEAETKSDFQDLRKALSTAIAGMAEKSSLNYSGALAIDLIRDVAKPLSIESIRQTVATLNVLIKEKERQERQARLAKVKGGTATGGAGKKKAKAARPNLGGAFKKDQEFSLEDNSEFADFGDDDFM.

Disordered regions lie at residues 1–27 (MSWD…DDEF), 40–63 (DAEE…KVDK), and 217–249 (LAKV…KKDQ). The span at 47-58 (QKQKPKAAPKAA) shows a compositional bias: basic residues. A coiled-coil region spans residues 191–221 (IESIRQTVATLNVLIKEKERQERQARLAKVK).

The protein belongs to the eIF-3 subunit J family. As to quaternary structure, component of the eukaryotic translation initiation factor 3 (eIF-3) complex.

It localises to the cytoplasm. Functionally, component of the eukaryotic translation initiation factor 3 (eIF-3) complex, which is involved in protein synthesis of a specialized repertoire of mRNAs and, together with other initiation factors, stimulates binding of mRNA and methionyl-tRNAi to the 40S ribosome. The eIF-3 complex specifically targets and initiates translation of a subset of mRNAs involved in cell proliferation. This chain is Eukaryotic translation initiation factor 3 subunit J, found in Eremothecium gossypii (strain ATCC 10895 / CBS 109.51 / FGSC 9923 / NRRL Y-1056) (Yeast).